Consider the following 151-residue polypeptide: Large ribosomal subunit protein uL22 (151 aa).

A compositionally biased stretch (polar residues) spans 1–18; sequence MARINYSINGDPETTSKA. Positions 1–23 are disordered; the sequence is MARINYSINGDPETTSKAMGSEL.

The protein belongs to the universal ribosomal protein uL22 family. As to quaternary structure, part of the 50S ribosomal subunit.

Its function is as follows. This protein binds specifically to 23S rRNA. It makes multiple contacts with different domains of the 23S rRNA in the assembled 50S subunit and ribosome. The globular domain of the protein is located near the polypeptide exit tunnel on the outside of the subunit, while an extended beta-hairpin is found that lines the wall of the exit tunnel in the center of the 70S ribosome. The chain is Large ribosomal subunit protein uL22 from Methanosarcina acetivorans (strain ATCC 35395 / DSM 2834 / JCM 12185 / C2A).